Consider the following 5099-residue polypeptide: Malformin synthetase mlfA (5099 aa).

The adenylation 1 stretch occupies residues 224 to 615; it reads QRHAADRPHS…CGRADTQVKL (392 aa). The Carrier 1 domain occupies 756–829; it reads THLENEIQLA…EAASLAKVRD (74 aa). S790 is subject to O-(pantetheine 4'-phosphoryl)serine. Residues 867–1297 are condensation 1; the sequence is EDVFPCTSMQ…PVDSLTLLKP (431 aa). Residues 1325-1717 are adenylation 2; sequence DRWVNRQPDT…GRKDTQVKLR (393 aa). Positions 1857 to 1934 constitute a Carrier 2 domain; that stretch reads ARAPELERTL…QIATQCEGIA (78 aa). S1894 is subject to O-(pantetheine 4'-phosphoryl)serine. A disordered region spans residues 1995–2040; that stretch reads MQQESSSSPAPSVSSSSSSSSAPKPLLAQPEPPTNLRDSVPEPFSL. Over residues 1999 to 2017 the composition is skewed to low complexity; it reads SSSSPAPSVSSSSSSSSAP. A condensation 2 region spans residues 2067-2482; it reads EDIYPATPLQ…ALSPGDKKVL (416 aa). The adenylation 3 stretch occupies residues 2505 to 2897; sequence LSTPHAPAVC…VGRKDGQLKL (393 aa). The 77-residue stretch at 3032 to 3108 folds into the Carrier 3 domain; it reads RPATAQERGL…RLVLHLQNTS (77 aa). The residue at position 3069 (S3069) is an O-(pantetheine 4'-phosphoryl)serine. Condensation stretches follow at residues 3125–3589 and 3610–4033; these read WVHL…TYDQ and DIYP…QQAM. Positions 4058 to 4446 are adenylation 4; the sequence is YANREAVCAW…VGRKDSQIKF (389 aa). Residues 4581–4657 form the Carrier 4 domain; the sequence is PPSTGMQQGI…DLAEHISSRV (77 aa). The residue at position 4618 (S4618) is an O-(pantetheine 4'-phosphoryl)serine. Positions 4696–5017 are condensation 5; the sequence is DILPTTGFQR…LQTVVQHQNV (322 aa).

Belongs to the NRP synthetase family.

The protein operates within secondary metabolite biosynthesis. In terms of biological role, nonribosomal peptide synthetase; part of the gene cluster that mediates the biosynthesis of malformins, cyclic pentapeptides with a disulfide bond between 2 consecutive cysteins, that show potential anti-tumor as well as antimalarial and antitrypanosomal properties. The nonribosomal peptide synthetase mlfA is responsible of the formation of the cyclic pentapeptide. The malformin biosynthesis clusters in malformin-producing fungi also contain enzymes involved in the formation of the disulfide bond between the two consecutive cysteins within malformins, in addition to additional tailoring enzymes such as methyltransferases or oxidoreductases. They are also composed of up to 4 major facilitator superfamily transporters, and transcription factors probably involved in the regulation of the expression of those clusters. In Aspergillus sclerotiicarbonarius (strain CBS 121057 / IBT 28362), this protein is Malformin synthetase mlfA.